The following is a 216-amino-acid chain: Ras-like protein (216 aa).

A GTP-binding site is contributed by 16 to 23; the sequence is GGGGVGKS. Residues 38–46 carry the Effector region motif; sequence YDPTIEDSY. GTP is bound by residues 63–67 and 122–125; these read DTAGQ and NKCD. S-palmitoyl cysteine attachment occurs at residues Cys209 and Cys210. Cys213 bears the Cysteine methyl ester mark. Cys213 carries the S-geranylgeranyl cysteine lipid modification. Positions 214–216 are cleaved as a propeptide — removed in mature form; it reads VVL.

The protein belongs to the small GTPase superfamily. Ras family.

The protein localises to the cell membrane. It carries out the reaction GTP + H2O = GDP + phosphate + H(+). Alternates between an inactive form bound to GDP and an active form bound to GTP. Activated by a guanine nucleotide-exchange factor (GEF) and inactivated by a GTPase-activating protein (GAP). This chain is Ras-like protein (RAS1), found in Cryptococcus neoformans var. neoformans serotype D (strain B-3501A) (Filobasidiella neoformans).